The sequence spans 1388 residues: DNA-directed RNA polymerase subunit beta (1388 aa).

Belongs to the RNA polymerase beta chain family. As to quaternary structure, the RNAP catalytic core consists of 2 alpha, 1 beta, 1 beta' and 1 omega subunit. When a sigma factor is associated with the core the holoenzyme is formed, which can initiate transcription.

It carries out the reaction RNA(n) + a ribonucleoside 5'-triphosphate = RNA(n+1) + diphosphate. Its function is as follows. DNA-dependent RNA polymerase catalyzes the transcription of DNA into RNA using the four ribonucleoside triphosphates as substrates. This Stenotrophomonas maltophilia (strain K279a) protein is DNA-directed RNA polymerase subunit beta.